The chain runs to 153 residues: Insulin-like growth factor 1 (153 aa).

Residues 49–77 are b; sequence GPETLCGAELVDALQFVCGDRGFYFNKPT. 3 disulfides stabilise this stretch: Cys54–Cys96, Cys66–Cys109, and Cys95–Cys100. Residues 78–89 form a c region; sequence GYGSSSRRAPQT. Residues 90 to 110 are a; the sequence is GIVDECCFRSCDLRRLEMYCA. The segment at 111–118 is d; the sequence is PLKPAKSA. A propeptide spans 119–153 (e peptide); sequence RSVRAQRHTDMPKAQKEVHLKNTSRGSSGNKNYRM. Residues 120–153 are disordered; sequence SVRAQRHTDMPKAQKEVHLKNTSRGSSGNKNYRM. The segment covering 125–138 has biased composition (basic and acidic residues); sequence RHTDMPKAQKEVHL. Over residues 139 to 153 the composition is skewed to polar residues; it reads KNTSRGSSGNKNYRM.

It belongs to the insulin family. As to quaternary structure, forms a ternary complex with IGFR1 and ITGAV:ITGB3. Forms a ternary complex with IGFR1 and ITGA6:ITGB4. Forms a ternary complex with IGFBP3 and ALS.

It localises to the secreted. Functionally, the insulin-like growth factors, isolated from plasma, are structurally and functionally related to insulin but have a much higher growth-promoting activity. May be a physiological regulator of [1-14C]-2-deoxy-D-glucose (2DG) transport and glycogen synthesis in osteoblasts. Stimulates glucose transport in bone-derived osteoblastic (PyMS) cells and is effective at much lower concentrations than insulin, not only regarding glycogen and DNA synthesis but also with regard to enhancing glucose uptake. May play a role in synapse maturation. Ca(2+)-dependent exocytosis of IGF1 is required for sensory perception of smell in the olfactory bulb. Acts as a ligand for IGF1R. Binds to the alpha subunit of IGF1R, leading to the activation of the intrinsic tyrosine kinase activity which autophosphorylates tyrosine residues in the beta subunit thus initiating a cascade of down-stream signaling events leading to activation of the PI3K-AKT/PKB and the Ras-MAPK pathways. Binds to integrins ITGAV:ITGB3 and ITGA6:ITGB4. Its binding to integrins and subsequent ternary complex formation with integrins and IGFR1 are essential for IGF1 signaling. Induces the phosphorylation and activation of IGFR1, MAPK3/ERK1, MAPK1/ERK2 and AKT1. As part of the MAPK/ERK signaling pathway, acts as a negative regulator of apoptosis in cardiomyocytes via promotion of STUB1/CHIP-mediated ubiquitination and degradation of ICER-type isoforms of CREM. The chain is Insulin-like growth factor 1 from Sus scrofa (Pig).